The following is a 30-amino-acid chain: ACYCRIPACFAGERRYGTCFYLGRVWAFCC.

Intrachain disulfides connect C2–C30, C4–C19, and C9–C29.

It localises to the secreted. Its function is as follows. In low salt conditions, has antibacterial activity against the Gram-negative bacterium E.coli ML35p (MIC=2.4 uM), the Gram-positive bacteria L.monocytogenes EGD (MIC=2.2 uM) and methicillin-resistant S.aureus ATCC 33591 (MIC=3.5 uM), and the fungus C.albicans 820 (MIC=3.9 uM). At high physiological salt concentrations the antimicrobial activity decreases significantly: E.coli ML35p (MIC=7.1 uM), L.monocytogenes EGD (MIC=1.8 uM), S.aureus ATCC 33591 (MIC=&gt;50 uM), and C.albicans 820 (MIC=&gt;50 uM). This chain is Alpha-defensin PhD-4, found in Papio hamadryas (Hamadryas baboon).